The chain runs to 744 residues: MSRTLYDKVWDDHVIDRHLVHEVTSPQAFEGLRNASRRVRRPDCTLATVDHNIPTTTRKKFKSITTFIDEADSRTQCETLETNVKEFELTYFGMEDSRQGIVHVIGPEQGFTLPGTTVVCGDSHTSTHGAFGALAFGIGTSEVEHVLATQTLLQKKSKNMRVCVEGELTPGVTSKDVALHVIGLIGTAGGTRCVIEFCGSAIASLSMEARMSICNMSIEGGARAGMIAPDEITFEYLRGRPLAPEGAEWDKAVQYWKSLKSDPNAKYDIDVKIAASDIAPTITWGTSPQDVAPITANVPDPSSVSDPARKAAMERALEYIGLVPNTPLEEVKIDKAFIGSCTNSRIEDLRSAASIVKGKHIADWVYAMVVPGSGLVKRQAEREGLDKVFTDAGFDWREAGCSMCLGMNPDQLSPGERCASTSNRNFEGRQGAGGRTHLMSPAMAAAAAIRGYLTDVRKFSSTPMVPRSPPPKFQTIQPKVEDEAAHKQAADQADPVTDCPPAGSPVNKGAPVASAMPAFTTLKGVAAPLAISNVDTDMIIPKQFLKTIKRTGLGSALFYGLRYDPATGAEKPDFVLNQPAYRSSKILVCTGPNFGCGSSREHAPWAFNDFGIRCIIATSFADIFFNNCFKNGMLPIILSQEQVDTLAKYATQKAEIEVDLVHQKIRYPGGEIPFDXMIEEFRKHCLVNGLDDIGLTMQKDSAIEKFEAKRTSTWPWLDGKAYKGKATKVTAIGSASQPAKKLDW.

Residues Cys-341, Cys-401, and Cys-404 each contribute to the [4Fe-4S] cluster site.

It belongs to the aconitase/IPM isomerase family. Monomer. Requires [4Fe-4S] cluster as cofactor.

The catalysed reaction is (2R,3S)-3-isopropylmalate = (2S)-2-isopropylmalate. It functions in the pathway amino-acid biosynthesis; L-leucine biosynthesis; L-leucine from 3-methyl-2-oxobutanoate: step 2/4. Its function is as follows. Catalyzes the isomerization between 2-isopropylmalate and 3-isopropylmalate, via the formation of 2-isopropylmaleate. The sequence is that of 3-isopropylmalate dehydratase (leu1) from Phycomyces blakesleeanus (strain ATCC 8743b / DSM 1359 / FGSC 10004 / NBRC 33097 / NRRL 1555).